A 264-amino-acid polypeptide reads, in one-letter code: Ribonuclease HII (264 aa).

One can recognise an RNase H type-2 domain in the interval 33–224; it reads GPVAGVDEVG…VRRVASGSNT (192 aa). Positions 39, 40, and 133 each coordinate a divalent metal cation. A disordered region spans residues 222-264; it reads SNTAEVADGQPDPRDGTAQTGEGRWSKSSHPATMRATGRAQGT.

This sequence belongs to the RNase HII family. Mn(2+) serves as cofactor. Requires Mg(2+) as cofactor.

It is found in the cytoplasm. The enzyme catalyses Endonucleolytic cleavage to 5'-phosphomonoester.. In terms of biological role, endonuclease that specifically degrades the RNA of RNA-DNA hybrids. This is Ribonuclease HII from Mycobacterium bovis (strain ATCC BAA-935 / AF2122/97).